Consider the following 199-residue polypeptide: FMN-dependent NADH:quinone oxidoreductase (199 aa).

Residues S17–S19 and M87–F90 each bind FMN.

It belongs to the azoreductase type 1 family. As to quaternary structure, homodimer. FMN is required as a cofactor.

It carries out the reaction 2 a quinone + NADH + H(+) = 2 a 1,4-benzosemiquinone + NAD(+). The catalysed reaction is N,N-dimethyl-1,4-phenylenediamine + anthranilate + 2 NAD(+) = 2-(4-dimethylaminophenyl)diazenylbenzoate + 2 NADH + 2 H(+). Its function is as follows. Quinone reductase that provides resistance to thiol-specific stress caused by electrophilic quinones. In terms of biological role, also exhibits azoreductase activity. Catalyzes the reductive cleavage of the azo bond in aromatic azo compounds to the corresponding amines. This chain is FMN-dependent NADH:quinone oxidoreductase, found in Mycoplasma mycoides subsp. mycoides SC (strain CCUG 32753 / NCTC 10114 / PG1).